The sequence spans 216 residues: Pyridoxine/pyridoxamine 5'-phosphate oxidase (216 aa).

FMN-binding positions include 65 to 70, 80 to 81, Arg-86, Lys-87, and Gln-109; these read RMVLLK and YT. Residue Lys-70 participates in substrate binding. Positions 127, 131, and 135 each coordinate substrate. FMN is bound by residues 144 to 145 and Trp-189; that span reads QS. 195–197 contributes to the substrate binding site; it reads RLH. An FMN-binding site is contributed by Arg-199.

It belongs to the pyridoxamine 5'-phosphate oxidase family. As to quaternary structure, homodimer. The cofactor is FMN.

It carries out the reaction pyridoxamine 5'-phosphate + O2 + H2O = pyridoxal 5'-phosphate + H2O2 + NH4(+). The enzyme catalyses pyridoxine 5'-phosphate + O2 = pyridoxal 5'-phosphate + H2O2. It functions in the pathway cofactor metabolism; pyridoxal 5'-phosphate salvage; pyridoxal 5'-phosphate from pyridoxamine 5'-phosphate: step 1/1. It participates in cofactor metabolism; pyridoxal 5'-phosphate salvage; pyridoxal 5'-phosphate from pyridoxine 5'-phosphate: step 1/1. Functionally, catalyzes the oxidation of either pyridoxine 5'-phosphate (PNP) or pyridoxamine 5'-phosphate (PMP) into pyridoxal 5'-phosphate (PLP). The chain is Pyridoxine/pyridoxamine 5'-phosphate oxidase from Sphingopyxis alaskensis (strain DSM 13593 / LMG 18877 / RB2256) (Sphingomonas alaskensis).